The following is a 134-amino-acid chain: XXKLVESGXXLVQPGGSLRLSKXYTENVNHPATTTXYKXQPMTPDFTEXQTHEGTHQDVFDQPNLXXWKGNTLPEGYEPAKXGEXGTQDANPKXXQDGDEXTXTGXXQXDKIGRYNLXPTIFFEATPPKANENQ.

A disordered region spans residues 31 to 115; that stretch reads PATTTXYKXQ…XXQXDKIGRY (85 aa). A compositionally biased stretch (basic and acidic residues) spans 50-59; sequence QTHEGTHQDV.

Belongs to the zinc-containing alcohol dehydrogenase family.

It carries out the reaction xylitol + NAD(+) = D-xylulose + NADH + H(+). With respect to regulation, activated by calcium and inhibited by zinc. This chain is D-xylulose reductase, found in Sus scrofa (Pig).